We begin with the raw amino-acid sequence, 119 residues long: Small ribosomal subunit protein uS13 (119 aa).

The segment at 94 to 119 is disordered; the sequence is GLPVRGQRTQTNARTRKGPRRGPAGK.

It belongs to the universal ribosomal protein uS13 family. In terms of assembly, part of the 30S ribosomal subunit. Forms a loose heterodimer with protein S19. Forms two bridges to the 50S subunit in the 70S ribosome.

Located at the top of the head of the 30S subunit, it contacts several helices of the 16S rRNA. In the 70S ribosome it contacts the 23S rRNA (bridge B1a) and protein L5 of the 50S subunit (bridge B1b), connecting the 2 subunits; these bridges are implicated in subunit movement. Contacts the tRNAs in the A and P-sites. The polypeptide is Small ribosomal subunit protein uS13 (Alkalilimnicola ehrlichii (strain ATCC BAA-1101 / DSM 17681 / MLHE-1)).